Consider the following 515-residue polypeptide: MAAVGRAGSFGSSSASGAANNASAELRAGGEEDDGQNLWSCILSEVSTRSRSKLPSGKSVLLLGEDGAGKTSLIGKIQGIEEYKKGRGMEYLYLNVHDEDRDDQTRCNVRILDGDLYHKGLLKFAMEANSLKDTLIMLVVDMSRPWTAMDSLQKWASVVREHIDKLKIPPEEMKEMEQKLVRDFQEYVEPGEDFPASPQRRNTSLQEDKDDSVILPLGADTLTCNLGIPVVVVCTKCDAISVLEKEHDYRDEHFDFIQSHIRRFCLQYGAALIYTSVKENKNIDLVYKYIVQKLYGFPFNVPAVVVEKDAVFIPAGWDNDKKIGILHENFQTLKAEDSFEDSIRKPPVRKFVHEKEIVAEDDQVFLMKQQSQLAKQPPTAAGRPVDASPRVPGGSPRTPNRSVTSNVASVTPIPAGSKKIDPNMKAGATSEGVLANFFNSLLSKKTGSPGGPGGVGGSPGGGSAGGTGSNLPPSAKKSGQKPVLTDVQAELDRISRKPEMVSPTSPTSPTEGEAS.

Positions 1–24 (MAAVGRAGSFGSSSASGAANNASA) are enriched in low complexity. The segment at 1-34 (MAAVGRAGSFGSSSASGAANNASAELRAGGEEDD) is disordered. An ATP-binding site is contributed by 64–71 (GEDGAGKT). Disordered stretches follow at residues 370–424 (QSQL…DPNM) and 445–515 (KTGS…GEAS). Over residues 397–409 (RTPNRSVTSNVAS) the composition is skewed to polar residues. The span at 448–468 (SPGGPGGVGGSPGGGSAGGTG) shows a compositional bias: gly residues. Positions 490–499 (ELDRISRKPE) are enriched in basic and acidic residues. A compositionally biased stretch (polar residues) spans 502 to 515 (SPTSPTSPTEGEAS).

The protein belongs to the dynein light intermediate chain family. In terms of assembly, homodimer. The cytoplasmic dynein 1 complex consists of two catalytic heavy chains (HCs) and a number of non-catalytic subunits presented by intermediate chains (ICs). Phosphorylated.

The protein localises to the cytoplasm. The protein resides in the cytoskeleton. It is found in the chromosome. Its subcellular location is the centromere. It localises to the kinetochore. The protein localises to the spindle pole. The protein resides in the recycling endosome membrane. Its function is as follows. Acts as one of several non-catalytic accessory components of the cytoplasmic dynein 1 complex that are thought to be involved in linking dynein to cargos and to adapter proteins that regulate dynein function. Cytoplasmic dynein 1 acts as a motor for the intracellular retrograde motility of vesicles and organelles along microtubules. May play a role in binding dynein to membranous organelles or chromosomes. May regulate the movement of peripheral sorting endosomes along microtubule tracks toward the microtubule organizing center/centrosome, generating the endosomal recycling compartment. This is Cytoplasmic dynein 1 light intermediate chain 1 (DYNC1LI1) from Gallus gallus (Chicken).